Here is a 150-residue protein sequence, read N- to C-terminus: MIP18 family protein FAM96A (150 aa).

It belongs to the MIP18 family.

May play a role in chromosome segregation through establishment of sister chromatid cohesion. In Dictyostelium discoideum (Social amoeba), this protein is MIP18 family protein FAM96A (fam96A).